The chain runs to 337 residues: Holliday junction branch migration complex subunit RuvB (337 aa).

Positions 1-182 (MEDRMVSASY…FGVLSAMEFY (182 aa)) are large ATPase domain (RuvB-L). Residues leucine 21, arginine 22, glycine 63, lysine 66, threonine 67, threonine 68, arginine 172, tyrosine 182, and arginine 219 each contribute to the ATP site. Threonine 67 contributes to the Mg(2+) binding site. The segment at 183-253 (NEDELKEIIL…IAKNALSLLE (71 aa)) is small ATPAse domain (RuvB-S). The tract at residues 256–337 (GEGFDKIDNK…REFKEQTKLT (82 aa)) is head domain (RuvB-H). Residues arginine 311 and arginine 316 each coordinate DNA.

This sequence belongs to the RuvB family. As to quaternary structure, homohexamer. Forms an RuvA(8)-RuvB(12)-Holliday junction (HJ) complex. HJ DNA is sandwiched between 2 RuvA tetramers; dsDNA enters through RuvA and exits via RuvB. An RuvB hexamer assembles on each DNA strand where it exits the tetramer. Each RuvB hexamer is contacted by two RuvA subunits (via domain III) on 2 adjacent RuvB subunits; this complex drives branch migration. In the full resolvosome a probable DNA-RuvA(4)-RuvB(12)-RuvC(2) complex forms which resolves the HJ.

It localises to the cytoplasm. The enzyme catalyses ATP + H2O = ADP + phosphate + H(+). The RuvA-RuvB-RuvC complex processes Holliday junction (HJ) DNA during genetic recombination and DNA repair, while the RuvA-RuvB complex plays an important role in the rescue of blocked DNA replication forks via replication fork reversal (RFR). RuvA specifically binds to HJ cruciform DNA, conferring on it an open structure. The RuvB hexamer acts as an ATP-dependent pump, pulling dsDNA into and through the RuvAB complex. RuvB forms 2 homohexamers on either side of HJ DNA bound by 1 or 2 RuvA tetramers; 4 subunits per hexamer contact DNA at a time. Coordinated motions by a converter formed by DNA-disengaged RuvB subunits stimulates ATP hydrolysis and nucleotide exchange. Immobilization of the converter enables RuvB to convert the ATP-contained energy into a lever motion, pulling 2 nucleotides of DNA out of the RuvA tetramer per ATP hydrolyzed, thus driving DNA branch migration. The RuvB motors rotate together with the DNA substrate, which together with the progressing nucleotide cycle form the mechanistic basis for DNA recombination by continuous HJ branch migration. Branch migration allows RuvC to scan DNA until it finds its consensus sequence, where it cleaves and resolves cruciform DNA. This chain is Holliday junction branch migration complex subunit RuvB, found in Clostridium novyi (strain NT).